We begin with the raw amino-acid sequence, 432 residues long: Adenylosuccinate synthetase (432 aa).

GTP-binding positions include 13 to 19 (GDEGKGK) and 41 to 43 (GHT). Residue aspartate 14 is the Proton acceptor of the active site. Mg(2+) contacts are provided by aspartate 14 and glycine 41. IMP contacts are provided by residues 14–17 (DEGK), 39–42 (NAGH), threonine 130, arginine 144, glutamine 225, threonine 240, and arginine 304. Histidine 42 (proton donor) is an active-site residue. 300–306 (ATTGRKR) is a substrate binding site. Residues arginine 306, 332–334 (KLD), and 415–417 (STG) each bind GTP.

It belongs to the adenylosuccinate synthetase family. Homodimer. The cofactor is Mg(2+).

The protein localises to the cytoplasm. It catalyses the reaction IMP + L-aspartate + GTP = N(6)-(1,2-dicarboxyethyl)-AMP + GDP + phosphate + 2 H(+). The protein operates within purine metabolism; AMP biosynthesis via de novo pathway; AMP from IMP: step 1/2. Its function is as follows. Plays an important role in the de novo pathway of purine nucleotide biosynthesis. Catalyzes the first committed step in the biosynthesis of AMP from IMP. This Vibrio cholerae serotype O1 (strain M66-2) protein is Adenylosuccinate synthetase.